The primary structure comprises 332 residues: Endo-1,4-beta-xylanase B (332 aa).

Residues Ser2–Gln331 form the GH10 domain. Glu134 serves as the catalytic Proton donor. Catalysis depends on Glu241, which acts as the Nucleophile.

It belongs to the glycosyl hydrolase 10 (cellulase F) family. Cytoplasmic xylanase subfamily.

The protein localises to the cytoplasm. The enzyme catalyses Endohydrolysis of (1-&gt;4)-beta-D-xylosidic linkages in xylans.. Its pathway is glycan degradation; xylan degradation. Completely inhibited by Ag(2+), Cu(2+), Hg(2+), Mn(2+), Pb(2+) and Sn(2+). Strongly inhibited by Fe(2+) and Zn(2+). Co(2+) and Ni(2+) cause little inhibition while Ca(2+) and Mg(2+) do not affect enzyme activity, and Ba(2+) produces a small stimulating effect. Irreversibly inactivated by SDS in vitro. Plays a role in plant xylan biodegradation, probably via the hydrolysis of short xylooligosaccharides resulting from extracellular xylan hydrolysis, once they have been transported inside cells. Shows similar activity on xylans of different rate of arabinose or methylglucuronic substitution. Also displays high activity on aryl-xylosides. Is active on xylotetraose and xylotriose, but does not hydrolyze xylobiose, indicating that XynB is a xylanase and not a beta-xylosidase. This Paenibacillus barcinonensis protein is Endo-1,4-beta-xylanase B (xynB).